The following is a 506-amino-acid chain: 2-isopropylmalate synthase (506 aa).

A Pyruvate carboxyltransferase domain is found at 4-266 (ILFMDTTLRD…EPSMTLKEIK (263 aa)). Mn(2+) is bound by residues Asp13, His201, His203, and Asn237. The regulatory domain stretch occupies residues 390–506 (NITQLQVHFV…KLKSFIQLVK (117 aa)).

The protein belongs to the alpha-IPM synthase/homocitrate synthase family. LeuA type 1 subfamily. In terms of assembly, homodimer. Requires Mn(2+) as cofactor.

Its subcellular location is the cytoplasm. It carries out the reaction 3-methyl-2-oxobutanoate + acetyl-CoA + H2O = (2S)-2-isopropylmalate + CoA + H(+). The protein operates within amino-acid biosynthesis; L-leucine biosynthesis; L-leucine from 3-methyl-2-oxobutanoate: step 1/4. Catalyzes the condensation of the acetyl group of acetyl-CoA with 3-methyl-2-oxobutanoate (2-ketoisovalerate) to form 3-carboxy-3-hydroxy-4-methylpentanoate (2-isopropylmalate). The protein is 2-isopropylmalate synthase of Bacillus thuringiensis (strain Al Hakam).